We begin with the raw amino-acid sequence, 350 residues long: Ferredoxin--NADP reductase (350 aa).

Residues Thr22, Glu41, Gln49, Tyr54, Val94, Phe129, Asp295, and Ser336 each contribute to the FAD site.

This sequence belongs to the ferredoxin--NADP reductase type 2 family. In terms of assembly, homodimer. FAD serves as cofactor.

It carries out the reaction 2 reduced [2Fe-2S]-[ferredoxin] + NADP(+) + H(+) = 2 oxidized [2Fe-2S]-[ferredoxin] + NADPH. The sequence is that of Ferredoxin--NADP reductase from Chlorobium luteolum (strain DSM 273 / BCRC 81028 / 2530) (Pelodictyon luteolum).